Here is a 1142-residue protein sequence, read N- to C-terminus: Error-prone DNA polymerase (1142 aa).

The disordered stretch occupies residues 291 to 361 (TSSPAQAARE…GTGAAAGTDR (71 aa)). 2 stretches are compositionally biased toward low complexity: residues 311–320 (LRASLPAERP) and 327–344 (GPAA…PGEP). Positions 345–355 (GLAGAGGGTGA) are enriched in gly residues.

The protein belongs to the DNA polymerase type-C family. DnaE2 subfamily.

It localises to the cytoplasm. It carries out the reaction DNA(n) + a 2'-deoxyribonucleoside 5'-triphosphate = DNA(n+1) + diphosphate. DNA polymerase involved in damage-induced mutagenesis and translesion synthesis (TLS). It is not the major replicative DNA polymerase. The sequence is that of Error-prone DNA polymerase from Anaeromyxobacter dehalogenans (strain 2CP-1 / ATCC BAA-258).